The primary structure comprises 245 residues: Flavin mononucleotide hydrolase 1, chloroplatic (245 aa).

Residues 1–26 (MAAAAMHTSAEFINLKPNMWKKNPVR) constitute a chloroplast transit peptide.

Belongs to the HAD-like hydrolase superfamily. DOG/GPP family. In terms of assembly, homodimer. Mg(2+) is required as a cofactor.

It localises to the plastid. The protein localises to the chloroplast stroma. It catalyses the reaction FMN + H2O = riboflavin + phosphate. The catalysed reaction is 5-amino-6-(5-phospho-D-ribitylamino)uracil + H2O = 5-amino-6-(D-ribitylamino)uracil + phosphate. In terms of biological role, FMN hydrolase that catalyzes the dephosphorylation of flavin mononucleotide (FMN) to riboflavin. Can also dephosphorylate 5-amino-6-(5-phospho-D-ribitylamino)uracil, also known as ARPP. Not required for riboflavin biosynthesis in planta, but may help maintaining flavin homeostasis within chloroplasts. The sequence is that of Flavin mononucleotide hydrolase 1, chloroplatic from Arabidopsis thaliana (Mouse-ear cress).